The chain runs to 294 residues: 4-hydroxy-tetrahydrodipicolinate synthase (294 aa).

A pyruvate-binding site is contributed by Thr45. Residue Tyr133 is the Proton donor/acceptor of the active site. Lys162 serves as the catalytic Schiff-base intermediate with substrate. Ile204 is a pyruvate binding site.

The protein belongs to the DapA family. As to quaternary structure, homotetramer; dimer of dimers.

It localises to the cytoplasm. The enzyme catalyses L-aspartate 4-semialdehyde + pyruvate = (2S,4S)-4-hydroxy-2,3,4,5-tetrahydrodipicolinate + H2O + H(+). It functions in the pathway amino-acid biosynthesis; L-lysine biosynthesis via DAP pathway; (S)-tetrahydrodipicolinate from L-aspartate: step 3/4. Functionally, catalyzes the condensation of (S)-aspartate-beta-semialdehyde [(S)-ASA] and pyruvate to 4-hydroxy-tetrahydrodipicolinate (HTPA). In Rhizobium meliloti (strain 1021) (Ensifer meliloti), this protein is 4-hydroxy-tetrahydrodipicolinate synthase.